The primary structure comprises 561 residues: Arginine--tRNA ligase (561 aa).

The 'HIGH' region motif lies at 136–146 (ANPTGLLHMGN).

Belongs to the class-I aminoacyl-tRNA synthetase family. In terms of assembly, monomer.

Its subcellular location is the cytoplasm. It catalyses the reaction tRNA(Arg) + L-arginine + ATP = L-arginyl-tRNA(Arg) + AMP + diphosphate. This is Arginine--tRNA ligase from Desulforamulus reducens (strain ATCC BAA-1160 / DSM 100696 / MI-1) (Desulfotomaculum reducens).